A 217-amino-acid polypeptide reads, in one-letter code: Nucleoside diphosphate kinase homolog 5 (217 aa).

Positions 18 to 151 (ERTLALIKPD…REIRFMFPHS (134 aa)) are NDK.

The protein belongs to the NDK family.

The protein localises to the cell projection. It localises to the cilium. In terms of biological role, functions as part of axonemal radial spoke complexes that play an important part in the motility of sperm and cilia. Does not seem to have nucleoside diphosphate kinase (NDPK) activity. Exhibits a 3'-5' exonuclease activity with a preference for single-stranded DNA, suggesting roles in DNA proofreading and repair. The sequence is that of Nucleoside diphosphate kinase homolog 5 (nme5) from Danio rerio (Zebrafish).